Reading from the N-terminus, the 91-residue chain is Large ribosomal subunit protein uL23c (91 aa).

Belongs to the universal ribosomal protein uL23 family. In terms of assembly, part of the 50S ribosomal subunit.

It is found in the plastid. The protein resides in the chloroplast. Functionally, binds to 23S rRNA. This is Large ribosomal subunit protein uL23c (rpl23) from Pinus koraiensis (Korean pine).